Consider the following 316-residue polypeptide: N-acetyl-gamma-glutamyl-phosphate reductase (316 aa).

C136 is an active-site residue.

It belongs to the NAGSA dehydrogenase family. Type 1 subfamily.

The protein localises to the cytoplasm. It carries out the reaction N-acetyl-L-glutamate 5-semialdehyde + phosphate + NADP(+) = N-acetyl-L-glutamyl 5-phosphate + NADPH + H(+). It functions in the pathway amino-acid biosynthesis; L-arginine biosynthesis; N(2)-acetyl-L-ornithine from L-glutamate: step 3/4. Its function is as follows. Catalyzes the NADPH-dependent reduction of N-acetyl-5-glutamyl phosphate to yield N-acetyl-L-glutamate 5-semialdehyde. The sequence is that of N-acetyl-gamma-glutamyl-phosphate reductase from Xanthomonas euvesicatoria pv. vesicatoria (strain 85-10) (Xanthomonas campestris pv. vesicatoria).